An 814-amino-acid polypeptide reads, in one-letter code: G-type lectin S-receptor-like serine/threonine-protein kinase At1g61370 (814 aa).

The N-terminal stretch at 1-25 is a signal peptide; the sequence is MGKIGIVFFASLLFLLIIFPSCAFA. The region spanning 26–145 is the Bulb-type lectin domain; it reads AITRASPLSI…VSERNLWESF (120 aa). Over 26–433 the chain is Extracellular; it reads AITRASPLSI…SELAGSNRVK (408 aa). N-linked (GlcNAc...) asparagine glycosylation is found at asparagine 43, asparagine 54, asparagine 89, asparagine 95, asparagine 253, and asparagine 271. The EGF-like domain maps to 282–318; that stretch reads PVSSCDVYNTCGPFGLCIRSNPPKCECLKGFVPKSDE. 2 disulfides stabilise this stretch: cysteine 286–cysteine 298 and cysteine 292–cysteine 306. N-linked (GlcNAc...) asparagine glycosylation is found at asparagine 324, asparagine 334, asparagine 340, and asparagine 383. Residues 337-423 enclose the PAN domain; sequence CDVNSSATAQ…GETLSIRLAS (87 aa). 2 disulfide bridges follow: cysteine 376-cysteine 397 and cysteine 380-cysteine 386. A helical transmembrane segment spans residues 434-454; the sequence is IIVASIVSISVFMILVFASYW. Topologically, residues 455–814 are cytoplasmic; sequence YWRYKAKQND…NITQTAIVGR (360 aa). The region spanning 501 to 786 is the Protein kinase domain; the sequence is FSMENKLGQG…DLPKPKQPVF (286 aa). ATP is bound by residues 507-515 and lysine 529; that span reads LGQGGFGPV. A phosphoserine mark is found at serine 535 and serine 550. The segment at 590 to 607 is caM-binding; that stretch reads TKKLELDWPKRFEIIQGI. Aspartate 626 functions as the Proton acceptor in the catalytic mechanism. Serine 630 and serine 643 each carry phosphoserine. Threonine 660 carries the phosphothreonine modification. Serine 703, serine 704, serine 797, and serine 802 each carry phosphoserine. A Phosphothreonine modification is found at threonine 809.

It belongs to the protein kinase superfamily. Ser/Thr protein kinase family.

The protein localises to the cell membrane. It carries out the reaction L-seryl-[protein] + ATP = O-phospho-L-seryl-[protein] + ADP + H(+). It catalyses the reaction L-threonyl-[protein] + ATP = O-phospho-L-threonyl-[protein] + ADP + H(+). The sequence is that of G-type lectin S-receptor-like serine/threonine-protein kinase At1g61370 from Arabidopsis thaliana (Mouse-ear cress).